Consider the following 138-residue polypeptide: uncharacterized protein (138 aa).

The disordered stretch occupies residues 1–27 (MEGELIENNGLDIYDTSETPKKRGRPA).

This is an uncharacterized protein from Escherichia coli (strain K12).